Reading from the N-terminus, the 581-residue chain is MSASELVTELSTRFKDAVLSEQMTADRFPTVWIRPDATIDVHRFLRQEIDRPFRMLVDLWAIDETARKHRDGLPPSGITIASHLMSHERNADIRIKIALDAEYPRAKSIGSVFPNAPWYEREAYDMFGVEFEAQPHSLRILLPPGWEGHPMRKTQPGRATERPLFNMTASLFDAKEHALAADPEKFGLPTHRDGVELMILNYGPHSMATHGVFRIVLALDGEEIVAARPDIGFHHRGAEKMAERQTWHNFLPYTDRVDYLGGVMGEMPYLQAVEKACGIKVPDRALTVRIMLSEMFRIMNHLLFYGTMAQDTGAMSPVFYMFTDRERGYRVIESITGARMHPGFFRIGGLSMDLPHGWDRLVREFLDWMPSRLDDYEGMVLRNEIFRARTKGIAAYDTAMALDWGVTGPGLRATGYAWDVRKARPYAGFENFDFEIPVGHAGDCYDRTVVRVEEIRQSLKIIRQCVDNMPSGPIKADHPLTTPPPRERMLHDIETMIHHFVSTSWGPVLPPGEYTGQVETVRGLTQFALISDGEPSSYRTRIRTPSFAHLQMISAVAPGMMVADLVAYLGSIDYVMSDVDR.

The NADH dehydrogenase I subunit C stretch occupies residues 1–172 (MSASELVTEL…PLFNMTASLF (172 aa)). The segment at 196-581 (ELMILNYGPH…IDYVMSDVDR (386 aa)) is NADH dehydrogenase I subunit D.

It in the N-terminal section; belongs to the complex I 30 kDa subunit family. In the C-terminal section; belongs to the complex I 49 kDa subunit family. As to quaternary structure, NDH-1 is composed of 13 different subunits. Subunits NuoB, CD, E, F, and G constitute the peripheral sector of the complex.

The protein resides in the cell inner membrane. The enzyme catalyses a quinone + NADH + 5 H(+)(in) = a quinol + NAD(+) + 4 H(+)(out). Its function is as follows. NDH-1 shuttles electrons from NADH, via FMN and iron-sulfur (Fe-S) centers, to quinones in the respiratory chain. The immediate electron acceptor for the enzyme in this species is believed to be ubiquinone. Couples the redox reaction to proton translocation (for every two electrons transferred, four hydrogen ions are translocated across the cytoplasmic membrane), and thus conserves the redox energy in a proton gradient. This chain is NADH-quinone oxidoreductase subunit C/D, found in Rhodopseudomonas palustris (strain TIE-1).